Consider the following 145-residue polypeptide: Small ribosomal subunit protein uS19 (145 aa).

This sequence belongs to the universal ribosomal protein uS19 family. In terms of assembly, component of the small ribosomal subunit.

Its subcellular location is the cytoplasm. In terms of biological role, component of the small ribosomal subunit. The ribosome is a large ribonucleoprotein complex responsible for the synthesis of proteins in the cell. In Xenopus laevis (African clawed frog), this protein is Small ribosomal subunit protein uS19 (rps15).